Consider the following 370-residue polypeptide: Platelet-derived growth factor D (370 aa).

Positions 1–23 are cleaved as a signal peptide; sequence MHRLILVSILVCANFCCYRDTFA. A CUB domain is found at 52 to 170; sequence RDENIRVTGT…PGFKIYYSFV (119 aa). The cysteines at positions 109 and 131 are disulfide-linked. Asparagine 276 is a glycosylation site (N-linked (GlcNAc...) asparagine). 2 disulfides stabilise this stretch: cysteine 302–cysteine 360 and cysteine 306–cysteine 362.

The protein belongs to the PDGF/VEGF growth factor family. Homodimer; disulfide-linked. Interacts with PDGFRB homodimers, and with heterodimers formed by PDGFRA and PDGFRB. In terms of processing, activated by proteolytic cleavage. Proteolytic removal of the N-terminal CUB domain releasing the core domain is necessary for unmasking the receptor-binding epitopes of the core domain. Cleavage after Arg-247 or Arg-249 by urokinase plasminogen activator gives rise to the active form. As to expression, widely expressed. Expressed at high levels in the kidney, adrenal glands, eye and CNS. In the kidney the localization is confined to arterial and arteriolar vascular smooth muscle cells and is also detected at low levels in the glomeruli In the eye in the anterior segment it is localized to the iris and ciliary body. In the retina localizes intensely to the outer plexiform layer, which contains photoreceptor axons and the synaptic layer between photoreceptors and second order neurons. In the spinal cord, prominently expressed in the motorneurons.

It localises to the secreted. Growth factor that plays an essential role in the regulation of embryonic development, cell proliferation, cell migration, survival and chemotaxis. Potent mitogen for cells of mesenchymal origin. Plays an important role in wound healing. Induces macrophage recruitment, increased interstitial pressure, and blood vessel maturation during angiogenesis. May play an important role in control of lens epithelial cell proliferation. Can initiate events that lead to a mesangial proliferative glomerulonephritis, including influx of monocytes and macrophages and production of extracellular matrix. In Rattus norvegicus (Rat), this protein is Platelet-derived growth factor D (Pdgfd).